The chain runs to 917 residues: Transcriptional regulatory protein SEF1 (917 aa).

The interval 1-88 is disordered; it reads MKFEKGKVRI…SKPTGHRPVT (88 aa). Residues 13 to 27 are compositionally biased toward pro residues; that stretch reads KPSPTPTNPQTPLPL. Positions 56-70 are enriched in low complexity; it reads SNSTASTPNSATPTS. Over residues 71–81 the composition is skewed to polar residues; it reads VGTPPQKTSKP. Residues 90 to 120 constitute a DNA-binding region (zn(2)-C6 fungal-type); that stretch reads CTFCRQHKIKCNASDNYPNPCERCKKMGLKC. Residues 129-164 adopt a coiled-coil conformation; that stretch reads RKGSQIQSLKSDVDELKAKIEMLTKNESLLTQALNQ. 2 disordered regions span residues 168–212 and 778–849; these read NHAS…ASPI and QQYP…PFIL. The span at 171–184 shows a compositional bias: low complexity; it reads SQQQQSSGSQSQQQ. The segment covering 191 to 212 has biased composition (polar residues); the sequence is RALSYTSANSSPQVAFSNASPI. Over residues 778–827 the composition is skewed to low complexity; the sequence is QQYPMQQDQQQQEPSQQQQQKHSQQSQQYQQQQQSNQQQPHLQHQRQFQQ.

As to quaternary structure, interacts with SSN3 and SFU1. Post-translationally, phosphorylated by SSN3 under iron-depleted conditions which leads to nuclear localization.

The protein resides in the cytoplasm. Its subcellular location is the nucleus. In terms of biological role, transcription factor which plays an essential role in virulence by activating the transcription of iron uptake genes such as FRE7 in iron-poor environments such as the host bloodstream and internal organs. Promotes commensalism in a mouse model of gastrointestinal infection. In Candida albicans (strain SC5314 / ATCC MYA-2876) (Yeast), this protein is Transcriptional regulatory protein SEF1 (SEF1).